A 426-amino-acid chain; its full sequence is MSKSENLYSAARELIPGGVNSPVRAFTGVGGTPLFIEKADGAYLYDVDGKAYIDYVGSWGPMVLGHNHPAIRNAVIEAAERGLSFGAPTEMEVKMAELVTNLVPTMDMVRMVNSGTEATMSAIRLARGFTGRDKIIKFEGCYHGHADCLLVKAGSGALTLGQPNSPGVPADFAKHTLTCTYNDLTSVRAAFEQYPQEIACIIVEPVAGNMNCVPPLPEFLPGLRALCDEFGALLIIDEVMTGFRVALAGAQDYYGVVPDLTCLGKIIGGGMPVGAFGGRRDVMDALAPTGPVYQAGTLSGNPIAMAAGFACLNEVAQPGIHETLDELTTRLAEGLLEAAEEANIPLVVNHVGGMFGIFFTDAESVTCYQDVMACDVERFKRFFHLMLEEGVYLAPSAFEAGFMSVAHSEEDINNTIDAARRVFAKL.

Residue lysine 265 is modified to N6-(pyridoxal phosphate)lysine.

This sequence belongs to the class-III pyridoxal-phosphate-dependent aminotransferase family. HemL subfamily. Homodimer. Pyridoxal 5'-phosphate serves as cofactor.

The protein resides in the cytoplasm. The enzyme catalyses (S)-4-amino-5-oxopentanoate = 5-aminolevulinate. The protein operates within porphyrin-containing compound metabolism; protoporphyrin-IX biosynthesis; 5-aminolevulinate from L-glutamyl-tRNA(Glu): step 2/2. In Salmonella newport (strain SL254), this protein is Glutamate-1-semialdehyde 2,1-aminomutase.